A 281-amino-acid polypeptide reads, in one-letter code: Formamidopyrimidine-DNA glycosylase (281 aa).

Catalysis depends on Pro-2, which acts as the Schiff-base intermediate with DNA. The Proton donor role is filled by Glu-3. Lys-58 serves as the catalytic Proton donor; for beta-elimination activity. Residues His-100, Arg-119, and Arg-160 each contribute to the DNA site. The FPG-type zinc-finger motif lies at 245-281 (RVYGREGAPCPTPGCTGTVQRIVQSGRSSFFCPLCQQ). Residue Arg-271 is the Proton donor; for delta-elimination activity of the active site.

Belongs to the FPG family. As to quaternary structure, monomer. Zn(2+) is required as a cofactor.

It carries out the reaction Hydrolysis of DNA containing ring-opened 7-methylguanine residues, releasing 2,6-diamino-4-hydroxy-5-(N-methyl)formamidopyrimidine.. It catalyses the reaction 2'-deoxyribonucleotide-(2'-deoxyribose 5'-phosphate)-2'-deoxyribonucleotide-DNA = a 3'-end 2'-deoxyribonucleotide-(2,3-dehydro-2,3-deoxyribose 5'-phosphate)-DNA + a 5'-end 5'-phospho-2'-deoxyribonucleoside-DNA + H(+). Functionally, involved in base excision repair of DNA damaged by oxidation or by mutagenic agents. Acts as a DNA glycosylase that recognizes and removes damaged bases. Has a preference for oxidized purines, such as 7,8-dihydro-8-oxoguanine (8-oxoG). Has AP (apurinic/apyrimidinic) lyase activity and introduces nicks in the DNA strand. Cleaves the DNA backbone by beta-delta elimination to generate a single-strand break at the site of the removed base with both 3'- and 5'-phosphates. The chain is Formamidopyrimidine-DNA glycosylase from Paracoccus denitrificans (strain Pd 1222).